We begin with the raw amino-acid sequence, 877 residues long: DNA mismatch repair protein MutS (877 aa).

Residue 630–637 participates in ATP binding; that stretch reads GPNMAGKS.

Belongs to the DNA mismatch repair MutS family.

Its function is as follows. This protein is involved in the repair of mismatches in DNA. It is possible that it carries out the mismatch recognition step. This protein has a weak ATPase activity. The protein is DNA mismatch repair protein MutS of Ruegeria pomeroyi (strain ATCC 700808 / DSM 15171 / DSS-3) (Silicibacter pomeroyi).